We begin with the raw amino-acid sequence, 166 residues long: Ribosome maturation factor RimM (166 aa).

The PRC barrel domain maps to 90–163; sequence EGEFLVSQII…TVTIELLEGL (74 aa).

It belongs to the RimM family. Binds ribosomal protein uS19.

Its subcellular location is the cytoplasm. Functionally, an accessory protein needed during the final step in the assembly of 30S ribosomal subunit, possibly for assembly of the head region. Essential for efficient processing of 16S rRNA. May be needed both before and after RbfA during the maturation of 16S rRNA. It has affinity for free ribosomal 30S subunits but not for 70S ribosomes. The polypeptide is Ribosome maturation factor RimM (Oenococcus oeni (strain ATCC BAA-331 / PSU-1)).